We begin with the raw amino-acid sequence, 183 residues long: Glutathione-regulated potassium-efflux system ancillary protein KefG (183 aa).

This sequence belongs to the NAD(P)H dehydrogenase (quinone) family. KefG subfamily. As to quaternary structure, interacts with KefB.

The protein resides in the cell inner membrane. It carries out the reaction a quinone + NADH + H(+) = a quinol + NAD(+). The enzyme catalyses a quinone + NADPH + H(+) = a quinol + NADP(+). Regulatory subunit of a potassium efflux system that confers protection against electrophiles. Required for full activity of KefB. This is Glutathione-regulated potassium-efflux system ancillary protein KefG from Salmonella paratyphi B (strain ATCC BAA-1250 / SPB7).